The primary structure comprises 463 residues: MPLELTQSRVQKIWIPVDHRPSLPRTCGPKLTNSPTVIVMVGLPARGKTYISKKLTRYLNWIGVPTKVFNLGEYRRDGVKQYSSYNFFRPDNEEAMKVRKQCALAALRDVKSYLTKEGGQIAVFDATNTTRERRHMILHFPKENDFKVFFIESVCDDPTVVASNIMEVKISSPDYKDCNSRENAMDDFMKRINCYEASYQPLDPDNDDRDLSLIKVIDVGQRFLVNRVQDHIQRRIVYYLMNIHWQPRTIYLCRHGESKHNLQGKIGGDSGLSSRGRKFANALSKFVEEQNLKDLKVWTSQLKSTIQTAEALQLPYEQWKALNEIDAGVCEEMTYEEIKDTYPEEYALAEADKYYYRYPTGESYQDLVQRLEPVIMELERQENVLVICHQAVCVCLLAYFLDKSAEEMPYLKCPLHAVLKLTPIAYGCRVESIYLNVESVSTHRERSEDAKKGPNPLMRSNSH.

Residues methionine 1–glutamine 246 form a 6-phosphofructo-2-kinase region. ATP is bound at residue glycine 42–tyrosine 50. 2 residues coordinate beta-D-fructose 6-phosphate: arginine 75 and arginine 99. Aspartate 125 is an active-site residue. Threonine 127 and arginine 133 together coordinate beta-D-fructose 6-phosphate. The active site involves cysteine 155. Asparagine 164 to lysine 169 contributes to the ATP binding site. Residues lysine 169, arginine 191, and tyrosine 195 each coordinate beta-D-fructose 6-phosphate. The fructose-2,6-bisphosphatase stretch occupies residues proline 247–histidine 463. Residue arginine 254 coordinates beta-D-fructose 2,6-bisphosphate. Histidine 255 serves as the catalytic Tele-phosphohistidine intermediate. Beta-D-fructose 2,6-bisphosphate contacts are provided by asparagine 261 and glycine 267. Glutamate 324 acts as the Proton donor/acceptor in catalysis. A beta-D-fructose 2,6-bisphosphate-binding site is contributed by tyrosine 335. ATP is bound at residue tyrosine 346–alanine 349. Beta-D-fructose 2,6-bisphosphate is bound by residues lysine 353, tyrosine 364, and glutamine 390. Residues glutamine 390–valine 394 and tyrosine 426 each bind ATP. The disordered stretch occupies residues arginine 444–histidine 463. At serine 462 the chain carries Phosphoserine; by AMPK and PKA.

The protein in the C-terminal section; belongs to the phosphoglycerate mutase family. Homodimer. Forms a heterodimer with PFKFB2. Phosphorylation by AMPK stimulates activity. Brain.

It carries out the reaction beta-D-fructose 2,6-bisphosphate + H2O = beta-D-fructose 6-phosphate + phosphate. The catalysed reaction is beta-D-fructose 6-phosphate + ATP = beta-D-fructose 2,6-bisphosphate + ADP + H(+). In terms of biological role, catalyzes both the synthesis and degradation of fructose 2,6-bisphosphate. In Bos taurus (Bovine), this protein is 6-phosphofructo-2-kinase/fructose-2,6-bisphosphatase 3 (PFKFB3).